The chain runs to 334 residues: Holliday junction branch migration complex subunit RuvB (334 aa).

The tract at residues 4–184 (ADRIISPNAT…FGIVQRLEFY (181 aa)) is large ATPase domain (RuvB-L). Residues Ile-23, Arg-24, Gly-65, Lys-68, Thr-69, Thr-70, 131 to 133 (EDY), Arg-174, Tyr-184, and Arg-221 contribute to the ATP site. Thr-69 contacts Mg(2+). The tract at residues 185–255 (SVEDLRHIVA…VADKALNMLN (71 aa)) is small ATPAse domain (RuvB-S). Residues 258-334 (LHGFDHMDRR…YNHFGLTMPE (77 aa)) form a head domain (RuvB-H) region. The DNA site is built by Arg-313 and Arg-318.

The protein belongs to the RuvB family. In terms of assembly, homohexamer. Forms an RuvA(8)-RuvB(12)-Holliday junction (HJ) complex. HJ DNA is sandwiched between 2 RuvA tetramers; dsDNA enters through RuvA and exits via RuvB. An RuvB hexamer assembles on each DNA strand where it exits the tetramer. Each RuvB hexamer is contacted by two RuvA subunits (via domain III) on 2 adjacent RuvB subunits; this complex drives branch migration. In the full resolvosome a probable DNA-RuvA(4)-RuvB(12)-RuvC(2) complex forms which resolves the HJ.

The protein resides in the cytoplasm. It catalyses the reaction ATP + H2O = ADP + phosphate + H(+). Functionally, the RuvA-RuvB-RuvC complex processes Holliday junction (HJ) DNA during genetic recombination and DNA repair, while the RuvA-RuvB complex plays an important role in the rescue of blocked DNA replication forks via replication fork reversal (RFR). RuvA specifically binds to HJ cruciform DNA, conferring on it an open structure. The RuvB hexamer acts as an ATP-dependent pump, pulling dsDNA into and through the RuvAB complex. RuvB forms 2 homohexamers on either side of HJ DNA bound by 1 or 2 RuvA tetramers; 4 subunits per hexamer contact DNA at a time. Coordinated motions by a converter formed by DNA-disengaged RuvB subunits stimulates ATP hydrolysis and nucleotide exchange. Immobilization of the converter enables RuvB to convert the ATP-contained energy into a lever motion, pulling 2 nucleotides of DNA out of the RuvA tetramer per ATP hydrolyzed, thus driving DNA branch migration. The RuvB motors rotate together with the DNA substrate, which together with the progressing nucleotide cycle form the mechanistic basis for DNA recombination by continuous HJ branch migration. Branch migration allows RuvC to scan DNA until it finds its consensus sequence, where it cleaves and resolves cruciform DNA. In Hahella chejuensis (strain KCTC 2396), this protein is Holliday junction branch migration complex subunit RuvB.